A 466-amino-acid polypeptide reads, in one-letter code: Muscarinic acetylcholine receptor M2 (466 aa).

Over Met1–Glu22 the chain is Extracellular. Residues Asn2, Asn3, Asn6, and Asn9 are each glycosylated (N-linked (GlcNAc...) asparagine). The chain crosses the membrane as a helical span at residues Val23–Met45. The Cytoplasmic segment spans residues Val46–Asn59. Residues Tyr60–Tyr80 traverse the membrane as a helical segment. Over Thr81 to Asp97 the chain is Extracellular. The cysteines at positions 96 and 176 are disulfide-linked. A helical transmembrane segment spans residues Leu98–Phe119. Positions Asp120–Tyr122 match the Important for signaling motif. Over Asp120–Met139 the chain is Cytoplasmic. A helical transmembrane segment spans residues Ala140 to Trp162. At Gln163–Ala184 the chain is on the extracellular side. Residues Ala185 to Ile209 form a helical membrane-spanning segment. At Ser210–Arg387 the chain is on the cytoplasmic side. Residues Lys218 to Asp355 form a disordered region. The residue at position 232 (Ser232) is a Phosphoserine. The segment covering Gly254–Val270 has biased composition (basic and acidic residues). Composition is skewed to polar residues over residues Asn284–Ala293, Asp304–Gly313, and Ser334–Asn353. Residues Thr388–Asn410 form a helical membrane-spanning segment. Residues Thr411 to Pro418 are Extracellular-facing. The cysteines at positions 413 and 416 are disulfide-linked. Residues Asn419 to Leu442 traverse the membrane as a helical segment. An Important for signaling motif is present at residues Asn436–Tyr440. The Cytoplasmic portion of the chain corresponds to Cys443 to Arg466. 3 positions are modified to phosphothreonine: Thr446, Thr450, and Thr465.

It belongs to the G-protein coupled receptor 1 family. Muscarinic acetylcholine receptor subfamily. CHRM2 sub-subfamily. Interacts with ARRB1 and ARRB2. Interacts with RACK1; the interaction regulates CHRM2 internalization. In terms of processing, phosphorylated in response to agonist treatment.

The protein localises to the cell membrane. The protein resides in the postsynaptic cell membrane. Functionally, the muscarinic acetylcholine receptor mediates various cellular responses, including inhibition of adenylate cyclase, breakdown of phosphoinositides and modulation of potassium channels through the action of G proteins. Primary transducing effect is adenylate cyclase inhibition. Signaling promotes phospholipase C activity, leading to the release of inositol trisphosphate (IP3); this then triggers calcium ion release into the cytosol. In Homo sapiens (Human), this protein is Muscarinic acetylcholine receptor M2 (CHRM2).